The following is a 175-amino-acid chain: uncharacterized protein (175 aa).

Residues 10–157 enclose the HTH marR-type domain; that stretch reads LFELYAELIH…AERLFRDLVT (148 aa). Residues 68-91 constitute a DNA-binding region (H-T-H motif); sequence VTSIAEKMNTTKATVSRISTKLLG.

The protein localises to the cytoplasm. This is an uncharacterized protein from Bacillus subtilis (strain 168).